The following is a 329-amino-acid chain: Ketol-acid reductoisomerase (NADP(+)) (329 aa).

Positions 1-181 constitute a KARI N-terminal Rossmann domain; that stretch reads MKIYYDQDAD…GGTRGGVLTT (181 aa). Residues 24–27, Arg47, and 82–85 each bind NADP(+); these read YGSQ and DQHQ. His107 is an active-site residue. Gly133 lines the NADP(+) pocket. Positions 182–327 constitute a KARI C-terminal knotted domain; it reads TFKEETETDL…AKLRGMMSWL (146 aa). Asp190, Glu194, Glu226, and Glu230 together coordinate Mg(2+). A substrate-binding site is contributed by Ser251.

This sequence belongs to the ketol-acid reductoisomerase family. The cofactor is Mg(2+).

It carries out the reaction (2R)-2,3-dihydroxy-3-methylbutanoate + NADP(+) = (2S)-2-acetolactate + NADPH + H(+). It catalyses the reaction (2R,3R)-2,3-dihydroxy-3-methylpentanoate + NADP(+) = (S)-2-ethyl-2-hydroxy-3-oxobutanoate + NADPH + H(+). It participates in amino-acid biosynthesis; L-isoleucine biosynthesis; L-isoleucine from 2-oxobutanoate: step 2/4. It functions in the pathway amino-acid biosynthesis; L-valine biosynthesis; L-valine from pyruvate: step 2/4. Involved in the biosynthesis of branched-chain amino acids (BCAA). Catalyzes an alkyl-migration followed by a ketol-acid reduction of (S)-2-acetolactate (S2AL) to yield (R)-2,3-dihydroxy-isovalerate. In the isomerase reaction, S2AL is rearranged via a Mg-dependent methyl migration to produce 3-hydroxy-3-methyl-2-ketobutyrate (HMKB). In the reductase reaction, this 2-ketoacid undergoes a metal-dependent reduction by NADPH to yield (R)-2,3-dihydroxy-isovalerate. The sequence is that of Ketol-acid reductoisomerase (NADP(+)) from Solidesulfovibrio magneticus (strain ATCC 700980 / DSM 13731 / RS-1) (Desulfovibrio magneticus).